The following is a 240-amino-acid chain: UPF0502 protein Veis_2102 (240 aa).

Belongs to the UPF0502 family.

The polypeptide is UPF0502 protein Veis_2102 (Verminephrobacter eiseniae (strain EF01-2)).